The chain runs to 392 residues: B2 bradykinin receptor (392 aa).

The Extracellular segment spans residues 1–61 (MPCSWKLLGF…EWWSWLNAIQ (61 aa)). Asparagine 29 and asparagine 40 each carry an N-linked (GlcNAc...) asparagine glycan. Residues 62 to 85 (APFLWVLFLLAALENLFVLSVFFL) form a helical membrane-spanning segment. Over 86–94 (HKNSCTVAE) the chain is Cytoplasmic. The helical transmembrane segment at 95-119 (IYLGNLAAADLILACGLPFWAITIA) threads the bilayer. The Extracellular segment spans residues 120 to 132 (NNFDWVFGEVLCR). A disulfide bridge links cysteine 131 with cysteine 212. A helical transmembrane segment spans residues 133 to 154 (VVNTMIYMNLYSSICFLMLVSI). Over 155–176 (DRYLALVKTMSMGRMRGVRWAK) the chain is Cytoplasmic. Tyrosine 157 carries the phosphotyrosine modification. Residues 177 to 199 (LYSLVIWGCTLLLSSPMLVFRTM) traverse the membrane as a helical segment. Residues 200-222 (REYSEEGHNVTACVIVYPSRSWE) are Extracellular-facing. A glycan (N-linked (GlcNAc...) asparagine) is linked at asparagine 208. The chain crosses the membrane as a helical span at residues 223–249 (VFTNVLLNLVGFLLPLSVITFCTVRIL). Over 250–268 (QVLRNNEMKKFKEVQTERK) the chain is Cytoplasmic. Residues 269–293 (ATVLVLAVLGLFVLCWVPFQISTFL) traverse the membrane as a helical segment. At 294–312 (DTLLRLGVLSGCWDEHAVD) the chain is on the extracellular side. The helical transmembrane segment at 313 to 336 (VITQISSYVAYSNSGLNPLVYVIV) threads the bilayer. Topologically, residues 337–392 (GKRFRKKSREVYRVLCQKGGCMGEPVQMENSMGTLRTSISVERQIHKLQDWAGKKQ) are cytoplasmic. Tyrosine 348 carries the post-translational modification Phosphotyrosine. A lipid anchor (S-palmitoyl cysteine) is attached at cysteine 352. Serine 367 is subject to Phosphoserine. Threonine 370 is subject to Phosphothreonine. A phosphoserine; by GRK6 mark is found at serine 374 and serine 376.

It belongs to the G-protein coupled receptor 1 family. Bradykinin receptor subfamily. BDKRB2 sub-subfamily. In terms of assembly, forms a complex with PECAM1 and GNAQ. Interacts with PECAM1.

The protein localises to the cell membrane. Functionally, receptor for bradykinin. It is associated with G proteins that activate a phosphatidylinositol-calcium second messenger system. This is B2 bradykinin receptor (Bdkrb2) from Mus musculus (Mouse).